A 354-amino-acid polypeptide reads, in one-letter code: UDP-3-O-acylglucosamine N-acyltransferase (354 aa).

H257 acts as the Proton acceptor in catalysis.

Belongs to the transferase hexapeptide repeat family. LpxD subfamily. In terms of assembly, homotrimer.

It carries out the reaction a UDP-3-O-[(3R)-3-hydroxyacyl]-alpha-D-glucosamine + a (3R)-hydroxyacyl-[ACP] = a UDP-2-N,3-O-bis[(3R)-3-hydroxyacyl]-alpha-D-glucosamine + holo-[ACP] + H(+). The protein operates within bacterial outer membrane biogenesis; LPS lipid A biosynthesis. Catalyzes the N-acylation of UDP-3-O-acylglucosamine using 3-hydroxyacyl-ACP as the acyl donor. Is involved in the biosynthesis of lipid A, a phosphorylated glycolipid that anchors the lipopolysaccharide to the outer membrane of the cell. The sequence is that of UDP-3-O-acylglucosamine N-acyltransferase from Rhizobium johnstonii (strain DSM 114642 / LMG 32736 / 3841) (Rhizobium leguminosarum bv. viciae).